We begin with the raw amino-acid sequence, 343 residues long: Methionine import ATP-binding protein MetN 2 (343 aa).

The ABC transporter domain maps to I2–V241. G38 to S45 contacts ATP.

It belongs to the ABC transporter superfamily. Methionine importer (TC 3.A.1.24) family. As to quaternary structure, the complex is composed of two ATP-binding proteins (MetN), two transmembrane proteins (MetI) and a solute-binding protein (MetQ).

Its subcellular location is the cell membrane. It carries out the reaction L-methionine(out) + ATP + H2O = L-methionine(in) + ADP + phosphate + H(+). The catalysed reaction is D-methionine(out) + ATP + H2O = D-methionine(in) + ADP + phosphate + H(+). In terms of biological role, part of the ABC transporter complex MetNIQ involved in methionine import. Responsible for energy coupling to the transport system. This is Methionine import ATP-binding protein MetN 2 from Lactiplantibacillus plantarum (strain ATCC BAA-793 / NCIMB 8826 / WCFS1) (Lactobacillus plantarum).